Here is a 282-residue protein sequence, read N- to C-terminus: Bifunctional protein FolD (282 aa).

NADP(+) is bound by residues 165-167 (GRS), Ser190, and Thr231.

Belongs to the tetrahydrofolate dehydrogenase/cyclohydrolase family. As to quaternary structure, homodimer.

It catalyses the reaction (6R)-5,10-methylene-5,6,7,8-tetrahydrofolate + NADP(+) = (6R)-5,10-methenyltetrahydrofolate + NADPH. The catalysed reaction is (6R)-5,10-methenyltetrahydrofolate + H2O = (6R)-10-formyltetrahydrofolate + H(+). It participates in one-carbon metabolism; tetrahydrofolate interconversion. Catalyzes the oxidation of 5,10-methylenetetrahydrofolate to 5,10-methenyltetrahydrofolate and then the hydrolysis of 5,10-methenyltetrahydrofolate to 10-formyltetrahydrofolate. The protein is Bifunctional protein FolD of Clostridium beijerinckii (strain ATCC 51743 / NCIMB 8052) (Clostridium acetobutylicum).